We begin with the raw amino-acid sequence, 128 residues long: Small ribosomal subunit protein uS11 (128 aa).

It belongs to the universal ribosomal protein uS11 family. In terms of assembly, part of the 30S ribosomal subunit. Interacts with proteins S7 and S18. Binds to IF-3.

Located on the platform of the 30S subunit, it bridges several disparate RNA helices of the 16S rRNA. Forms part of the Shine-Dalgarno cleft in the 70S ribosome. The polypeptide is Small ribosomal subunit protein uS11 (Wolbachia sp. subsp. Drosophila simulans (strain wRi)).